Consider the following 259-residue polypeptide: Thiazole synthase (259 aa).

Lys95 functions as the Schiff-base intermediate with DXP in the catalytic mechanism. Residues Gly156, 183 to 184, and 205 to 206 contribute to the 1-deoxy-D-xylulose 5-phosphate site; these read AG and NS.

This sequence belongs to the ThiG family. In terms of assembly, homotetramer. Forms heterodimers with either ThiH or ThiS.

It localises to the cytoplasm. It carries out the reaction [ThiS sulfur-carrier protein]-C-terminal-Gly-aminoethanethioate + 2-iminoacetate + 1-deoxy-D-xylulose 5-phosphate = [ThiS sulfur-carrier protein]-C-terminal Gly-Gly + 2-[(2R,5Z)-2-carboxy-4-methylthiazol-5(2H)-ylidene]ethyl phosphate + 2 H2O + H(+). It participates in cofactor biosynthesis; thiamine diphosphate biosynthesis. In terms of biological role, catalyzes the rearrangement of 1-deoxy-D-xylulose 5-phosphate (DXP) to produce the thiazole phosphate moiety of thiamine. Sulfur is provided by the thiocarboxylate moiety of the carrier protein ThiS. In vitro, sulfur can be provided by H(2)S. This Coxiella burnetii (strain RSA 331 / Henzerling II) protein is Thiazole synthase.